Reading from the N-terminus, the 131-residue chain is MLHITTMTDKAPIKTNKRLQQTQAQVNEVVDIMRVNVDKVLERDKNLSELDGRADALQAGASQFEASAGKLKRKFWWKNCKMLAVLGVLVVILIIVLIVWVVSEQKNKVEQSEHSSHHLVMDNSSHLLSEQ.

The Cytoplasmic portion of the chain corresponds to 1–81 (MLHITTMTDK…KRKFWWKNCK (81 aa)). Residues 18–78 (RLQQTQAQVN…GKLKRKFWWK (61 aa)) form the v-SNARE coiled-coil homology domain. Residues 82–102 (MLAVLGVLVVILIIVLIVWVV) traverse the membrane as a helical; Anchor for type IV membrane protein segment. Topologically, residues 103-131 (SEQKNKVEQSEHSSHHLVMDNSSHLLSEQ) are vesicular. Residues 112-131 (SEHSSHHLVMDNSSHLLSEQ) form a disordered region. Polar residues predominate over residues 122 to 131 (DNSSHLLSEQ).

Belongs to the synaptobrevin family.

The protein localises to the cytoplasmic vesicle. It is found in the secretory vesicle. It localises to the synaptic vesicle membrane. Its subcellular location is the synapse. The protein resides in the synaptosome. Its function is as follows. Unknown, but synaptobrevins are presumed to be involved in targeting and fusion of synaptic vesicles with the presynaptic membrane as well as in neurotransmitter release. The protein is Synaptobrevin-like protein of Schistosoma mansoni (Blood fluke).